A 137-amino-acid chain; its full sequence is Ubiquitin-conjugating enzyme variant MMS2 (137 aa).

The 133-residue stretch at 5-137 (PRNFRLLEEL…LRQPKEGETF (133 aa)) folds into the UBC core domain. Position 71 is a phosphoserine (Ser71).

The protein belongs to the ubiquitin-conjugating enzyme family. Heterodimer with UBC13.

In terms of biological role, has a role in the DNA error-free postreplication repair (PRR) pathway. Lacks catalytic activity by itself. The UBC13/MMS2 heterodimer catalyzes the synthesis of non-canonical poly-ubiquitin chains that are linked through 'Lys-63'. The protein is Ubiquitin-conjugating enzyme variant MMS2 (MMS2) of Saccharomyces cerevisiae (strain ATCC 204508 / S288c) (Baker's yeast).